We begin with the raw amino-acid sequence, 210 residues long: Uracil phosphoribosyltransferase (210 aa).

Residues Arg80, Arg105, and 132–140 contribute to the 5-phospho-alpha-D-ribose 1-diphosphate site; that span reads DPMLATGGS. Residues Ile195 and 200–202 each bind uracil; that span reads GDA. A 5-phospho-alpha-D-ribose 1-diphosphate-binding site is contributed by Asp201.

The protein belongs to the UPRTase family. Mg(2+) serves as cofactor.

It carries out the reaction UMP + diphosphate = 5-phospho-alpha-D-ribose 1-diphosphate + uracil. It functions in the pathway pyrimidine metabolism; UMP biosynthesis via salvage pathway; UMP from uracil: step 1/1. Allosterically activated by GTP. Functionally, catalyzes the conversion of uracil and 5-phospho-alpha-D-ribose 1-diphosphate (PRPP) to UMP and diphosphate. This chain is Uracil phosphoribosyltransferase, found in Caldanaerobacter subterraneus subsp. tengcongensis (strain DSM 15242 / JCM 11007 / NBRC 100824 / MB4) (Thermoanaerobacter tengcongensis).